A 204-amino-acid polypeptide reads, in one-letter code: MRLSRRPETFLLAFVLLCTLLGLGCPLHCEICTAAGSRCHGQMKTCSSDKDTCVLLVGKATSKGKELVHTYKGCIRSQDCYSGVISTTMGPKDHMVTSSFCCQSDGCNSAFLSVPLTNLTENGLMCPACTASFRDKCMGPMTHCTGKENHCVSLSGHVQAGIFKPRFAMRGCATESMCFTKPGAEVPTGTNVLFLHHIECTHSP.

The N-terminal stretch at methionine 1 to proline 26 is a signal peptide. Residues leucine 27–threonine 117 form the UPAR/Ly6 domain. Disulfide bonds link cysteine 29-cysteine 53, cysteine 32-cysteine 39, cysteine 46-cysteine 74, cysteine 80-cysteine 101, cysteine 102-cysteine 107, cysteine 126-cysteine 151, and cysteine 144-cysteine 172.

It belongs to the CNF-like-inhibitor family.

The protein resides in the secreted. The polypeptide is phospholipase A2 inhibitor and Ly6/PLAUR domain-containing protein (PINLYP) (Homo sapiens (Human)).